A 333-amino-acid polypeptide reads, in one-letter code: Electron transfer flavoprotein subunit alpha, mitochondrial (333 aa).

Residues 1–19 (MFRAAAPGQLRRAASLLRF) constitute a mitochondrion transit peptide. Residues 20–204 (QSTLVIAEHA…EISEWLDQKL (185 aa)) form a domain I region. Lys-59 carries the N6-acetyllysine; alternate modification. An N6-succinyllysine; alternate modification is found at Lys-59. An N6-acetyllysine modification is found at Lys-62. Lys-69 bears the N6-acetyllysine; alternate mark. An N6-succinyllysine; alternate modification is found at Lys-69. Lys-75 carries the post-translational modification N6-acetyllysine. Thr-93 is modified (phosphothreonine). 2 positions are modified to N6-acetyllysine: Lys-101 and Lys-139. The residue at position 140 (Ser-140) is a Phosphoserine. Lys-158 carries the N6-acetyllysine; alternate modification. An N6-succinyllysine; alternate modification is found at Lys-158. At Lys-164 the chain carries N6-acetyllysine. Position 187 is an N6-succinyllysine (Lys-187). At Lys-203 the chain carries N6-acetyllysine; alternate. At Lys-203 the chain carries N6-succinyllysine; alternate. A domain II region spans residues 205–333 (TKSDRPELTG…PEMTEILKKK (129 aa)). Lys-216 carries the N6-succinyllysine modification. Arg-223 serves as a coordination point for FAD. An N6-acetyllysine; alternate mark is found at Lys-226 and Lys-232. 2 positions are modified to N6-succinyllysine; alternate: Lys-226 and Lys-232. FAD-binding positions include Ser-248, 263 to 266 (VGQT), 281 to 286 (SGAIQH), and Asn-300. An N6-succinyllysine modification is found at Lys-301. An FAD-binding site is contributed by 318–319 (DL).

This sequence belongs to the ETF alpha-subunit/FixB family. Heterodimer composed of ETFA and ETFB. Identified in a complex that contains ETFA, ETFB and ETFRF1. Interaction with ETFRF1 promotes dissociation of the bound FAD and loss of electron transfer activity. Interacts with TASOR. FAD is required as a cofactor.

Its subcellular location is the mitochondrion matrix. In terms of biological role, heterodimeric electron transfer flavoprotein that accepts electrons from several mitochondrial dehydrogenases, including acyl-CoA dehydrogenases, glutaryl-CoA and sarcosine dehydrogenase. It transfers the electrons to the main mitochondrial respiratory chain via ETF-ubiquinone oxidoreductase (ETF dehydrogenase). Required for normal mitochondrial fatty acid oxidation and normal amino acid metabolism. This chain is Electron transfer flavoprotein subunit alpha, mitochondrial (ETFA), found in Pongo abelii (Sumatran orangutan).